A 599-amino-acid chain; its full sequence is Microtubule-associated protein 70-2 (599 aa).

Positions 1 to 30 (MADGGGGEEGSASALRGSARRRGAVQPAGL) are disordered. A coiled-coil region spans residues 43–349 (DPVKVELNRL…ARSEAQLKEK (307 aa)). Positions 227 to 460 (ILDRLHRQKV…HLLNRSTDAV (234 aa)) are required for targeting to microtubules. 2 disordered regions span residues 357–453 (LEDG…PHLL) and 557–599 (AMRL…RNLQ). Residues 404–420 (RRSPSFNSRSSLSTSSS) show a composition bias toward low complexity. Positions 533–570 (LTKAMEVEAKKMRREVAAMEKEVAAMRLDKDQENKAKR) form a coiled coil. Residues 557-568 (AMRLDKDQENKA) are compositionally biased toward basic and acidic residues.

Belongs to the MAP70 family.

The protein localises to the cytoplasm. It is found in the cytoskeleton. In terms of biological role, plant-specific protein that interact with microtubules. This Oryza sativa subsp. japonica (Rice) protein is Microtubule-associated protein 70-2 (MAP70.2).